The chain runs to 445 residues: Glucose-6-phosphate isomerase (445 aa).

E287 (proton donor) is an active-site residue. Catalysis depends on residues H308 and K422.

It belongs to the GPI family.

It is found in the cytoplasm. The catalysed reaction is alpha-D-glucose 6-phosphate = beta-D-fructose 6-phosphate. The protein operates within carbohydrate biosynthesis; gluconeogenesis. It participates in carbohydrate degradation; glycolysis; D-glyceraldehyde 3-phosphate and glycerone phosphate from D-glucose: step 2/4. Functionally, catalyzes the reversible isomerization of glucose-6-phosphate to fructose-6-phosphate. In Bacteroides thetaiotaomicron (strain ATCC 29148 / DSM 2079 / JCM 5827 / CCUG 10774 / NCTC 10582 / VPI-5482 / E50), this protein is Glucose-6-phosphate isomerase.